The sequence spans 272 residues: Cell division protein ZipA (272 aa).

Topologically, residues 1 to 4 (METH) are periplasmic. The helical transmembrane segment at 5 to 25 (ILFFILAGLLIAVLIGYSIWS) threads the bilayer. Topologically, residues 26 to 272 (ARREKSRIFS…RQNYLLRVAN (247 aa)) are cytoplasmic.

This sequence belongs to the ZipA family. In terms of assembly, interacts with FtsZ via their C-terminal domains.

It is found in the cell inner membrane. In terms of biological role, essential cell division protein that stabilizes the FtsZ protofilaments by cross-linking them and that serves as a cytoplasmic membrane anchor for the Z ring. Also required for the recruitment to the septal ring of downstream cell division proteins. This Glaesserella parasuis serovar 5 (strain SH0165) (Haemophilus parasuis) protein is Cell division protein ZipA.